The chain runs to 2971 residues: uncharacterized protein (2971 aa).

The disordered stretch occupies residues 929 to 964 (SANFSNGPEESSLSTRLHIQKKRKAKKQRLETRRQK). The span at 936–945 (PEESSLSTRL) shows a compositional bias: polar residues. Positions 946 to 955 (HIQKKRKAKK) are enriched in basic residues.

The protein localises to the plastid. The protein resides in the chloroplast. This is an uncharacterized protein from Chlamydomonas reinhardtii (Chlamydomonas smithii).